We begin with the raw amino-acid sequence, 67 residues long: Small ribosomal subunit protein bS21 (67 aa).

The protein belongs to the bacterial ribosomal protein bS21 family.

This chain is Small ribosomal subunit protein bS21, found in Acidiphilium cryptum (strain JF-5).